A 268-amino-acid polypeptide reads, in one-letter code: Imidazole glycerol phosphate synthase subunit HisF (268 aa).

Catalysis depends on residues D12 and D131.

Belongs to the HisA/HisF family. As to quaternary structure, heterodimer of HisH and HisF.

It is found in the cytoplasm. It catalyses the reaction 5-[(5-phospho-1-deoxy-D-ribulos-1-ylimino)methylamino]-1-(5-phospho-beta-D-ribosyl)imidazole-4-carboxamide + L-glutamine = D-erythro-1-(imidazol-4-yl)glycerol 3-phosphate + 5-amino-1-(5-phospho-beta-D-ribosyl)imidazole-4-carboxamide + L-glutamate + H(+). It functions in the pathway amino-acid biosynthesis; L-histidine biosynthesis; L-histidine from 5-phospho-alpha-D-ribose 1-diphosphate: step 5/9. Functionally, IGPS catalyzes the conversion of PRFAR and glutamine to IGP, AICAR and glutamate. The HisF subunit catalyzes the cyclization activity that produces IGP and AICAR from PRFAR using the ammonia provided by the HisH subunit. In Chelativorans sp. (strain BNC1), this protein is Imidazole glycerol phosphate synthase subunit HisF.